The following is a 431-amino-acid chain: Saglin (431 aa).

The N-terminal stretch at 1-39 is a signal peptide; it reads MSVRDYSGVQVISSRKHRSMSRLPTVLLLLASAAVLAAG. An N-linked (GlcNAc...) asparagine glycan is attached at N95. Residues 120–169 are a coiled coil; it reads LDDAQRQMEQEHRQYAATLEEQLHAAQQETQQEQEMKKALQKQLDALTDS.

Homodimer. Female salivary gland (at protein level). Not detected in female carcass without salivary glands, midgut and hemolymph (at protein level). Probably not expressed in male tissues.

The protein localises to the secreted. (Microbial infection) Facilitates efficient midgut colonization by Plasmodium berghei parasites. Promotes successful transmission of Plasmodium berghei at low infection densities. Functionally, (Microbial infection) Facilitates efficient midgut colonization by Plasmodium falciparum. The sequence is that of Saglin from Anopheles coluzzii (African malaria mosquito).